A 695-amino-acid chain; its full sequence is Follicle-stimulating hormone receptor (695 aa).

Residues 1-17 (MALLLVSLLAFLSLGSG) form the signal peptide. 2 cysteine pairs are disulfide-bonded: Cys-18/Cys-25 and Cys-23/Cys-32. An LRRNT domain is found at 18-46 (CHHRICHCSNRVFLCQESKVTEIPSDLPR). The Extracellular segment spans residues 18 to 366 (CHHRICHCSN…EDIMGYNILR (349 aa)). 9 LRR repeats span residues 49–72 (IELRFVLTKLRVIQKGAFSGFGDL), 73–97 (EKIEISQNDVLEVIEADVFSNLPKL), 98–118 (HEIRIEKANNLLYINPEAFQN), 119–143 (LPNLQYLLISNTGIKHLPDVHKIHS), 144–169 (LQKVLLDIQDNINIHTIERNSFVGLS), 170–192 (FESVILWLNKNGIQEIHNCAFNG), 193–216 (TQLDELNLSDNNNLEELPNDVFHG), 217–240 (ASGPVILDISRTRIHSLPSYGLEN), and 241–259 (LKKLRARSTYNLKKLPTLE). Asn-191 and Asn-199 each carry an N-linked (GlcNAc...) asparagine glycan. Intrachain disulfides connect Cys-275/Cys-346, Cys-276/Cys-292, Cys-276/Cys-356, and Cys-292/Cys-338. N-linked (GlcNAc...) asparagine glycosylation is found at Asn-293 and Asn-318. At Tyr-335 the chain carries Sulfotyrosine. Residues 367–387 (VLIWFISILAITGNIIVLVIL) form a helical membrane-spanning segment. The Cytoplasmic segment spans residues 388–398 (TTSQYKLTVPR). The chain crosses the membrane as a helical span at residues 399–421 (FLMCNLAFADLCIGIYLLLIASV). The Extracellular portion of the chain corresponds to 422-443 (DIHTKSQYHNYAIDWQTGAGCD). Cys-442 and Cys-517 form a disulfide bridge. The helical transmembrane segment at 444-465 (AAGFFTVFASELSVYTLTAITL) threads the bilayer. At 466–485 (ERWHTITHAMQLDCKVQLRH) the chain is on the cytoplasmic side. The chain crosses the membrane as a helical span at residues 486 to 508 (AASVMVMGWIFAFAAALFPIFGI). Topologically, residues 509 to 528 (SSYMKVSICLPMDIDSPLSQ) are extracellular. Residues 529–550 (LYVMSLLVLNVLAFVVICGCYI) traverse the membrane as a helical segment. The Cytoplasmic segment spans residues 551 to 573 (HIYLTVRNPNIVSSSSDTRIAKR). Residues 574–597 (MAMLIFTDFLCMAPISFFAISASL) traverse the membrane as a helical segment. At 598 to 608 (KVPLITVSKAK) the chain is on the extracellular side. The helical transmembrane segment at 609–630 (ILLVLFHPINSCANPFLYAIFT) threads the bilayer. Over 631–695 (KNFRRDFFIL…LVPLSHLAQN (65 aa)) the chain is Cytoplasmic.

This sequence belongs to the G-protein coupled receptor 1 family. FSH/LSH/TSH subfamily. As to quaternary structure, homotrimer. Functions as a homotrimer binding the FSH hormone heterodimer composed of CGA and FSHB. Interacts with ARRB2. Interacts with APPL2; interaction is independent of follicle stimulating hormone stimulation. In terms of processing, sulfated. Post-translationally, N-glycosylated; indirectly required for FSH-binding, possibly via a conformational change that allows high affinity binding of hormone. As to expression, sertoli cells and ovarian granulosa cells.

Its subcellular location is the cell membrane. Its function is as follows. G protein-coupled receptor for follitropin, the follicle-stimulating hormone. Through cAMP production activates the downstream PI3K-AKT and ERK1/ERK2 signaling pathways. This chain is Follicle-stimulating hormone receptor (FSHR), found in Homo sapiens (Human).